Reading from the N-terminus, the 326-residue chain is MPSPHFSKVLVFGATGEVGSAVALEAHALGAHVSIALRDTTKHNEWISPSQEHAADLQRISADLTDPDSLKRAVHDTGAQAAFIYAVRSKDTLRGAITALRDAGIQYLVFLSTSQVRTAGTTKGDIRSIKPDHFIPWQHAQVEIALEELEVPHAAVRAGFFASNPLRIYLDRSSEPKQVNLLAPEVPHDPIDPKDIGRAAAAVLVNPRLYASGYQGEPKKDVVYLSGPALLSQTEQWEIINRELVAAGKPEVKVNHITVEQYLENLAKLHVPDVVAKSLAKSMVETRALYAPEDYEKSRGNVELLTGRKATAFDEFVKREIPRYFD.

Residues 13-18 and 161-164 each bind NADP(+); these read GATGEV and FASN.

Belongs to the NmrA-type oxidoreductase family.

In terms of biological role, nitrogen metabolite regulation-like protein involved in the regulation of the gene cluster that mediates the biosynthesis of bikaverin, a red pigment also considered as a mycotoxin. The chain is Nitrogen metabolite regulation-like protein bik4 from Gibberella fujikuroi (strain CBS 195.34 / IMI 58289 / NRRL A-6831) (Bakanae and foot rot disease fungus).